The sequence spans 350 residues: Heat-inducible transcription repressor HrcA (350 aa).

The protein belongs to the HrcA family.

Its function is as follows. Negative regulator of class I heat shock genes (grpE-dnaK-dnaJ and groELS operons). Prevents heat-shock induction of these operons. This Ligilactobacillus salivarius (strain UCC118) (Lactobacillus salivarius) protein is Heat-inducible transcription repressor HrcA.